We begin with the raw amino-acid sequence, 153 residues long: Xanthine-guanine phosphoribosyltransferase (153 aa).

Residues 37–38 (RG), Arg69, and 88–96 (DDLVDTGGT) contribute to the 5-phospho-alpha-D-ribose 1-diphosphate site. Arg69 provides a ligand contact to GMP. Position 89 (Asp89) interacts with Mg(2+). Residues Asp92 and Ile135 each contribute to the guanine site. Residues Asp92 and Ile135 each contribute to the xanthine site. GMP contacts are provided by residues 92–96 (DTGGT) and 134–135 (WI).

This sequence belongs to the purine/pyrimidine phosphoribosyltransferase family. XGPT subfamily. Homotetramer. Requires Mg(2+) as cofactor.

The protein resides in the cell inner membrane. The catalysed reaction is GMP + diphosphate = guanine + 5-phospho-alpha-D-ribose 1-diphosphate. The enzyme catalyses XMP + diphosphate = xanthine + 5-phospho-alpha-D-ribose 1-diphosphate. It carries out the reaction IMP + diphosphate = hypoxanthine + 5-phospho-alpha-D-ribose 1-diphosphate. Its pathway is purine metabolism; GMP biosynthesis via salvage pathway; GMP from guanine: step 1/1. The protein operates within purine metabolism; XMP biosynthesis via salvage pathway; XMP from xanthine: step 1/1. Its function is as follows. Purine salvage pathway enzyme that catalyzes the transfer of the ribosyl-5-phosphate group from 5-phospho-alpha-D-ribose 1-diphosphate (PRPP) to the N9 position of the 6-oxopurines guanine and xanthine to form the corresponding ribonucleotides GMP (guanosine 5'-monophosphate) and XMP (xanthosine 5'-monophosphate), with the release of PPi. To a lesser extent, also acts on hypoxanthine. The protein is Xanthine-guanine phosphoribosyltransferase of Photorhabdus laumondii subsp. laumondii (strain DSM 15139 / CIP 105565 / TT01) (Photorhabdus luminescens subsp. laumondii).